A 2452-amino-acid polypeptide reads, in one-letter code: Lovastatin diketide synthase lovF (2452 aa).

Residues proline 10–arginine 381 enclose the Ketosynthase family 3 (KS3) domain. Catalysis depends on for beta-ketoacyl synthase activity residues cysteine 173, histidine 308, and histidine 343. The segment at valine 496–lysine 790 is malonyl-CoA:ACP transacylase (MAT) domain. The For malonyltransferase activity role is filled by serine 555. The interval histidine 861–proline 998 is N-terminal hotdog fold. The interval histidine 861–glycine 1166 is dehydratase (DH) domain. A PKS/mFAS DH domain is found at histidine 861–threonine 1171. The Proton acceptor; for dehydratase activity role is filled by histidine 893. A disordered region spans residues glutamine 997–threonine 1017. The C-terminal hotdog fold stretch occupies residues proline 1012–threonine 1171. The Proton donor; for dehydratase activity role is filled by aspartate 1079. A methyltransferase (CMet) domain region spans residues glutamate 1343–methionine 1528. The interval glycine 1745–valine 2064 is enoylreductase (ER) domain. Residues serine 2088–glutamine 2260 form a ketoreductase (KR) domain region. One can recognise a Carrier domain in the interval alanine 2373–tyrosine 2450. Serine 2410 bears the O-(pantetheine 4'-phosphoryl)serine mark.

In terms of assembly, interacts with LovD. Requires pantetheine 4'-phosphate as cofactor.

The enzyme catalyses holo-[2-methylbutanoate polyketide synthase] + 2 malonyl-CoA + S-adenosyl-L-methionine + 2 NADPH + 3 H(+) = (S)-2-methylbutanoyl-[2-methylbutanoate polyketide synthase] + S-adenosyl-L-homocysteine + 2 CO2 + 2 NADP(+) + 2 CoA + H2O. It participates in polyketide biosynthesis; lovastatin biosynthesis. Functionally, lovastatin diketide synthase; part of the gene cluster that mediates the biosynthesis of lovastatin (also known as mevinolin, mevacor or monacolin K), a hypolipidemic inhibitor of (3S)-hydroxymethylglutaryl-coenzyme A (HMG-CoA) reductase (HMGR). The first step in the biosynthesis of lovastatin is the production of dihydromonacolin L acid by the lovastatin nonaketide synthase lovB and the trans-acting enoyl reductase lovC via condensation of one acetyl-CoA unit and 8 malonyl-CoA units. Dihydromonacolin L acid is released from lovB by the thioesterase lovG. Next, dihydromonacolin L acid is oxidized by the dihydromonacolin L monooxygenase lovA twice to form monacolin J acid. The 2-methylbutyrate moiety of lovastatin is synthesized by the lovastatin diketide synthase lovF via condensation of one acetyl-CoA unit and one malonyl-CoA unit. Finally, the covalent attachment of this moiety to monacolin J acid is catalyzed by the transesterase lovD to yield lovastatin. LovD has broad substrate specificity and can also convert monacolin J to simvastatin using alpha-dimethylbutanoyl-S-methyl-3-mercaptopropionate (DMB-S-MMP) as the thioester acyl donor, and can also catalyze the reverse reaction and function as hydrolase in vitro. LovD has much higher activity with LovF-bound 2-methylbutanoate than with free diketide substrates. The polypeptide is Lovastatin diketide synthase lovF (Aspergillus terreus (strain NIH 2624 / FGSC A1156)).